The following is a 486-amino-acid chain: ATP synthase subunit beta (486 aa).

A compositionally biased stretch (basic and acidic residues) spans 1 to 12 (MTTTAEKTDRPG). Residues 1–22 (MTTTAEKTDRPGKPGSSDTSGR) form a disordered region. 171-178 (GGAGVGKT) is a binding site for ATP.

This sequence belongs to the ATPase alpha/beta chains family. F-type ATPases have 2 components, CF(1) - the catalytic core - and CF(0) - the membrane proton channel. CF(1) has five subunits: alpha(3), beta(3), gamma(1), delta(1), epsilon(1). CF(0) has three main subunits: a(1), b(2) and c(9-12). The alpha and beta chains form an alternating ring which encloses part of the gamma chain. CF(1) is attached to CF(0) by a central stalk formed by the gamma and epsilon chains, while a peripheral stalk is formed by the delta and b chains.

Its subcellular location is the cell membrane. The enzyme catalyses ATP + H2O + 4 H(+)(in) = ADP + phosphate + 5 H(+)(out). Produces ATP from ADP in the presence of a proton gradient across the membrane. The catalytic sites are hosted primarily by the beta subunits. The sequence is that of ATP synthase subunit beta from Mycobacterium tuberculosis (strain ATCC 25177 / H37Ra).